A 454-amino-acid chain; its full sequence is Arginine biosynthesis bifunctional protein ArgJ, mitochondrial (454 aa).

Substrate contacts are provided by Thr184, Lys213, Thr224, Glu311, Asn449, and Thr454. The active-site Nucleophile is the Thr224.

The protein belongs to the ArgJ family. Heterodimer of an alpha and a beta chain. In terms of processing, the alpha and beta chains are autoproteolytically processed from a single precursor protein within the mitochondrion.

It localises to the mitochondrion matrix. The enzyme catalyses N(2)-acetyl-L-ornithine + L-glutamate = N-acetyl-L-glutamate + L-ornithine. The catalysed reaction is L-glutamate + acetyl-CoA = N-acetyl-L-glutamate + CoA + H(+). Its pathway is amino-acid biosynthesis; L-arginine biosynthesis; L-ornithine and N-acetyl-L-glutamate from L-glutamate and N(2)-acetyl-L-ornithine (cyclic): step 1/1. The protein operates within amino-acid biosynthesis; L-arginine biosynthesis; N(2)-acetyl-L-ornithine from L-glutamate: step 1/4. In terms of biological role, catalyzes two activities which are involved in the cyclic version of arginine biosynthesis: the synthesis of acetylglutamate from glutamate and acetyl-CoA, and of ornithine by transacetylation between acetylornithine and glutamate. This is Arginine biosynthesis bifunctional protein ArgJ, mitochondrial from Aspergillus clavatus (strain ATCC 1007 / CBS 513.65 / DSM 816 / NCTC 3887 / NRRL 1 / QM 1276 / 107).